The sequence spans 23 residues: Basic phospholipase A2 homolog Vur-S49 analog (23 aa).

The segment at 1-23 is disordered; the sequence is SVLEIGLMLQEETEKNPKTSYSI.

Contains 7 disulfide bonds. As to expression, expressed by the venom gland.

The protein localises to the secreted. This chain is Basic phospholipase A2 homolog Vur-S49 analog, found in Vipera renardi (Steppe viper).